The sequence spans 268 residues: Tryptophan synthase alpha chain (268 aa).

Active-site proton acceptor residues include glutamate 49 and aspartate 60.

It belongs to the TrpA family. In terms of assembly, tetramer of two alpha and two beta chains.

The catalysed reaction is (1S,2R)-1-C-(indol-3-yl)glycerol 3-phosphate + L-serine = D-glyceraldehyde 3-phosphate + L-tryptophan + H2O. The protein operates within amino-acid biosynthesis; L-tryptophan biosynthesis; L-tryptophan from chorismate: step 5/5. In terms of biological role, the alpha subunit is responsible for the aldol cleavage of indoleglycerol phosphate to indole and glyceraldehyde 3-phosphate. The sequence is that of Tryptophan synthase alpha chain from Vibrio vulnificus (strain YJ016).